We begin with the raw amino-acid sequence, 748 residues long: Polyribonucleotide nucleotidyltransferase (748 aa).

The Mg(2+) site is built by Asp487 and Asp493. The region spanning 554-613 is the KH domain; it reads PSTTTIKIDKDKIRDIIGPSGKVIKEICETSGAKIDISDDGTVSVYASDRDKLKVALDKI. Residues 623 to 691 enclose the S1 motif domain; that stretch reads GEIFNGTVVK…NKGKAKLTIK (69 aa). The tract at residues 693 to 733 is disordered; it reads ADKDKSSNNTKPKTHVNNTKDNSEPEQRRDSSKKRAWNEDN. Polar residues predominate over residues 699–712; the sequence is SNNTKPKTHVNNTK. The span at 713-722 shows a compositional bias: basic and acidic residues; sequence DNSEPEQRRD.

It belongs to the polyribonucleotide nucleotidyltransferase family. Requires Mg(2+) as cofactor.

It localises to the cytoplasm. It catalyses the reaction RNA(n+1) + phosphate = RNA(n) + a ribonucleoside 5'-diphosphate. Functionally, involved in mRNA degradation. Catalyzes the phosphorolysis of single-stranded polyribonucleotides processively in the 3'- to 5'-direction. The polypeptide is Polyribonucleotide nucleotidyltransferase (Rickettsia peacockii (strain Rustic)).